The sequence spans 240 residues: ATP-dependent dethiobiotin synthetase BioD (240 aa).

12–17 lines the ATP pocket; sequence EIGKTV. Residue T16 coordinates Mg(2+). K37 is a catalytic residue. S41 provides a ligand contact to substrate. ATP contacts are provided by residues D54, 115–118, 179–180, and 207–209; these read EGSG, NQ, and PYI. Mg(2+) is bound by residues D54 and E115.

Belongs to the dethiobiotin synthetase family. In terms of assembly, homodimer. It depends on Mg(2+) as a cofactor.

It is found in the cytoplasm. The enzyme catalyses (7R,8S)-7,8-diammoniononanoate + CO2 + ATP = (4R,5S)-dethiobiotin + ADP + phosphate + 3 H(+). Its pathway is cofactor biosynthesis; biotin biosynthesis; biotin from 7,8-diaminononanoate: step 1/2. In terms of biological role, catalyzes a mechanistically unusual reaction, the ATP-dependent insertion of CO2 between the N7 and N8 nitrogen atoms of 7,8-diaminopelargonic acid (DAPA, also called 7,8-diammoniononanoate) to form a ureido ring. The protein is ATP-dependent dethiobiotin synthetase BioD of Clostridium acetobutylicum (strain ATCC 824 / DSM 792 / JCM 1419 / IAM 19013 / LMG 5710 / NBRC 13948 / NRRL B-527 / VKM B-1787 / 2291 / W).